The primary structure comprises 1395 residues: Adventurous-gliding motility protein Z (1395 aa).

The 119-residue stretch at 4–122 folds into the Response regulatory domain; sequence RVLIVESEHD…ELAALSHGIV (119 aa). Asp-48 carries the 4-aspartylphosphate modification. Disordered stretches follow at residues 137–172, 874–893, 919–947, 1212–1249, 1287–1312, and 1326–1395; these read LNGTREAPPPMPPSLKAAAGGPPKLPKRERRSAMTE, AAESSAHIGDLTSERDGLRS, EQHAHQESRKAAASTQTTLEGQLAEARAH, AAESKAHEASTRLAAAQKERKDLEARHAKEQEDLAAKQ, RYKSKSATTATPAKAAAKPAAAEDDE, and AAAA…ELDK. Residues 213–911 are a coiled coil; sequence EGKIQILRDE…LEQTHGQLAA (699 aa). 2 stretches are compositionally biased toward basic and acidic residues: residues 919-928 and 1228-1249; these read EQHAHQESRK and QKERKDLEARHAKEQEDLAAKQ. 2 stretches are compositionally biased toward low complexity: residues 1291 to 1306 and 1326 to 1352; these read KSATTATPAKAAAKPA and AAAAQAPAPAKKPAAKPAAQAPAKKAP. The segment covering 1382–1395 has biased composition (acidic residues); the sequence is EDDDWTALVDELDK.

Interacts with MglA.

The protein localises to the cytoplasm. Functionally, required for adventurous-gliding motility (A motility), in response to environmental signals sensed by the frz chemosensory system. Forms ordered clusters that span the cell length and that remain stationary relative to the surface across which the cells move, serving as anchor points (focal, transient adhesion sites) that allow the bacterium to move forward. Clusters disassemble at the lagging cell pole. The chain is Adventurous-gliding motility protein Z (aglZ) from Myxococcus xanthus (strain DK1622).